The sequence spans 95 residues: Aspartyl/glutamyl-tRNA(Asn/Gln) amidotransferase subunit C (95 aa).

This sequence belongs to the GatC family. As to quaternary structure, heterotrimer of A, B and C subunits.

The enzyme catalyses L-glutamyl-tRNA(Gln) + L-glutamine + ATP + H2O = L-glutaminyl-tRNA(Gln) + L-glutamate + ADP + phosphate + H(+). It carries out the reaction L-aspartyl-tRNA(Asn) + L-glutamine + ATP + H2O = L-asparaginyl-tRNA(Asn) + L-glutamate + ADP + phosphate + 2 H(+). Allows the formation of correctly charged Asn-tRNA(Asn) or Gln-tRNA(Gln) through the transamidation of misacylated Asp-tRNA(Asn) or Glu-tRNA(Gln) in organisms which lack either or both of asparaginyl-tRNA or glutaminyl-tRNA synthetases. The reaction takes place in the presence of glutamine and ATP through an activated phospho-Asp-tRNA(Asn) or phospho-Glu-tRNA(Gln). The sequence is that of Aspartyl/glutamyl-tRNA(Asn/Gln) amidotransferase subunit C from Thioalkalivibrio sulfidiphilus (strain HL-EbGR7).